Consider the following 129-residue polypeptide: Integration host factor subunit alpha (129 aa).

A disordered region spans residues Ser87–Gly129. The segment covering Pro95–Glu117 has biased composition (basic and acidic residues). Acidic residues predominate over residues Asp118–Gly129.

Belongs to the bacterial histone-like protein family. Heterodimer of an alpha and a beta chain.

Its function is as follows. This protein is one of the two subunits of integration host factor, a specific DNA-binding protein that functions in genetic recombination as well as in transcriptional and translational control. It is necessary for normal cell growth and the production of carotenoids in response to light. The polypeptide is Integration host factor subunit alpha (ihfA) (Myxococcus xanthus).